The following is a 376-amino-acid chain: Uroporphyrinogen decarboxylase (376 aa).

Substrate-binding positions include 29-33, aspartate 79, tyrosine 155, serine 210, and histidine 342; that span reads RQAGR.

It belongs to the uroporphyrinogen decarboxylase family. In terms of assembly, homodimer.

Its subcellular location is the cytoplasm. The catalysed reaction is uroporphyrinogen III + 4 H(+) = coproporphyrinogen III + 4 CO2. It participates in porphyrin-containing compound metabolism; protoporphyrin-IX biosynthesis; coproporphyrinogen-III from 5-aminolevulinate: step 4/4. Functionally, catalyzes the decarboxylation of four acetate groups of uroporphyrinogen-III to yield coproporphyrinogen-III. This Paracidovorax citrulli (strain AAC00-1) (Acidovorax citrulli) protein is Uroporphyrinogen decarboxylase.